The sequence spans 548 residues: MESQRNLILIGLLFVSFLLWQQWESDKAPKPAPTTVAQTEHFVPEAGQTGDIPQVSEQANANTARKLITVSSDVLKLTLDTQGGDIVSADLLAHKLEEGKDQPFVLLTSQPEHLYVAQSGLVGRNGPDSQAQGRPTYEAAQTSYQLADGQDQVVVPMTWTDSKGVVFTKEFVLKRGDYAVGVDYKIDNKSAEPVQVQFYGQLKQTVTTPKDQQGHAMVASAYRGGAFSSEDTRYKKYTFDEMKDADLNKTTKGGWVAMLQHYFVSAWAPNADDTNSFYSRVIPGKDQAIIGYKAPLVDVAAGQQAEVTSKLWVGPKLQDQMAKVANHLDLTVDYGWLWFIAQPLHWLLTVFHGFVQNWGVAIIMLTLLVRGIMFPLTKAQYTSMAKMRMLQPKLAALRERFGDDRQKMSQGMMELYKKEKVNPLGGCLPILVQMPIFIALYWALMESVELRHAPFALWITDLSVKDPFFVLPILMGASMWYLQKMSPTTITDPMQQKVMQFMPIIFTFMFLWFPAGLTLYWLVSNVISITQQTIIYRQLEKKGLHTRS.

The next 5 membrane-spanning stretches (helical) occupy residues N6–D26, N357–T377, L424–L444, F455–M475, and P503–V523.

Belongs to the OXA1/ALB3/YidC family. Type 1 subfamily. Interacts with the Sec translocase complex via SecD. Specifically interacts with transmembrane segments of nascent integral membrane proteins during membrane integration.

The protein localises to the cell inner membrane. Its function is as follows. Required for the insertion and/or proper folding and/or complex formation of integral membrane proteins into the membrane. Involved in integration of membrane proteins that insert both dependently and independently of the Sec translocase complex, as well as at least some lipoproteins. Aids folding of multispanning membrane proteins. The protein is Membrane protein insertase YidC of Aeromonas hydrophila subsp. hydrophila (strain ATCC 7966 / DSM 30187 / BCRC 13018 / CCUG 14551 / JCM 1027 / KCTC 2358 / NCIMB 9240 / NCTC 8049).